A 331-amino-acid chain; its full sequence is Protein mono-ADP-ribosyltransferase PARP11 (331 aa).

K11 is subject to N6-(ADP-ribosyl)lysine. The 85-residue stretch at 15–99 (SDVDDMDTSD…VTGKQRLIKR (85 aa)) folds into the WWE domain. C49 and C65 each carry ADP-ribosylcysteine. At D80 the chain carries ADP-ribosyl aspartic acid. A PARP catalytic domain is found at 116-331 (IPMPTHWENV…IYPEYLIDFH (216 aa)).

This sequence belongs to the ARTD/PARP family. Auto-mono-ADP-ribosylated. Predominantly expressed in testis, preferentially in postmeiotic germ cells. Also detectable in other tissues, including liver, lung, spleen, thymus and brain.

The protein resides in the nucleus. It is found in the nuclear pore complex. The catalysed reaction is L-aspartyl-[protein] + NAD(+) = 4-O-(ADP-D-ribosyl)-L-aspartyl-[protein] + nicotinamide. It carries out the reaction L-cysteinyl-[protein] + NAD(+) = S-(ADP-D-ribosyl)-L-cysteinyl-[protein] + nicotinamide + H(+). It catalyses the reaction L-glutamyl-[protein] + NAD(+) = 5-O-(ADP-D-ribosyl)-L-glutamyl-[protein] + nicotinamide. The enzyme catalyses L-lysyl-[protein] + NAD(+) = N(6)-(ADP-D-ribosyl)-L-lysyl-[protein] + nicotinamide + H(+). In terms of biological role, mono-ADP-ribosyltransferase that mediates mono-ADP-ribosylation of target proteins. Plays a role in nuclear envelope stability and nuclear remodeling during spermiogenesis. Inhibits the type I interferon activated signaling pathway. Mechanistically, mono-ADP-ribosylates beta-TrCP/BTRC to promote IFNAR1 ubiquitination and protect BTRC from ubiquitin-proteasome degradation. This chain is Protein mono-ADP-ribosyltransferase PARP11, found in Mus musculus (Mouse).